We begin with the raw amino-acid sequence, 165 residues long: Cytochrome c-type biogenesis protein CcmE (165 aa).

The Cytoplasmic segment spans residues 1 to 29 (MSATAEQNARNPKGKGGFARTVSQRKRKR). The helical; Signal-anchor for type II membrane protein transmembrane segment at 30–50 (LFLIGGALAVLAVAVGLMLTA) threads the bilayer. The Periplasmic portion of the chain corresponds to 51 to 165 (FNQDIRFFRT…LKKKGVWEGK (115 aa)). Positions 143 and 147 each coordinate heme.

It belongs to the CcmE/CycJ family.

It localises to the cell inner membrane. Its function is as follows. Heme chaperone required for the biogenesis of c-type cytochromes. Transiently binds heme delivered by CcmC and transfers the heme to apo-cytochromes in a process facilitated by CcmF and CcmH. The protein is Cytochrome c-type biogenesis protein CcmE of Brucella abortus (strain S19).